Consider the following 481-residue polypeptide: Proline--tRNA ligase (481 aa).

This sequence belongs to the class-II aminoacyl-tRNA synthetase family. ProS type 3 subfamily. In terms of assembly, homodimer.

The protein localises to the cytoplasm. The catalysed reaction is tRNA(Pro) + L-proline + ATP = L-prolyl-tRNA(Pro) + AMP + diphosphate. Catalyzes the attachment of proline to tRNA(Pro) in a two-step reaction: proline is first activated by ATP to form Pro-AMP and then transferred to the acceptor end of tRNA(Pro). In Chlorobium luteolum (strain DSM 273 / BCRC 81028 / 2530) (Pelodictyon luteolum), this protein is Proline--tRNA ligase.